The following is a 467-amino-acid chain: Asparagine--tRNA ligase (467 aa).

Belongs to the class-II aminoacyl-tRNA synthetase family. As to quaternary structure, homodimer.

The protein localises to the cytoplasm. It catalyses the reaction tRNA(Asn) + L-asparagine + ATP = L-asparaginyl-tRNA(Asn) + AMP + diphosphate + H(+). The sequence is that of Asparagine--tRNA ligase from Bacteroides fragilis (strain ATCC 25285 / DSM 2151 / CCUG 4856 / JCM 11019 / LMG 10263 / NCTC 9343 / Onslow / VPI 2553 / EN-2).